The sequence spans 423 residues: Gamma-glutamyl phosphate reductase (423 aa).

The protein belongs to the gamma-glutamyl phosphate reductase family.

Its subcellular location is the cytoplasm. The catalysed reaction is L-glutamate 5-semialdehyde + phosphate + NADP(+) = L-glutamyl 5-phosphate + NADPH + H(+). Its pathway is amino-acid biosynthesis; L-proline biosynthesis; L-glutamate 5-semialdehyde from L-glutamate: step 2/2. Functionally, catalyzes the NADPH-dependent reduction of L-glutamate 5-phosphate into L-glutamate 5-semialdehyde and phosphate. The product spontaneously undergoes cyclization to form 1-pyrroline-5-carboxylate. This chain is Gamma-glutamyl phosphate reductase, found in Paraburkholderia xenovorans (strain LB400).